The sequence spans 61 residues: Small ribosomal subunit protein uS14 (61 aa).

Residues cysteine 24, cysteine 27, cysteine 40, and cysteine 43 each coordinate Zn(2+).

Belongs to the universal ribosomal protein uS14 family. Zinc-binding uS14 subfamily. As to quaternary structure, part of the 30S ribosomal subunit. Contacts proteins S3 and S10. Zn(2+) is required as a cofactor.

Functionally, binds 16S rRNA, required for the assembly of 30S particles and may also be responsible for determining the conformation of the 16S rRNA at the A site. This chain is Small ribosomal subunit protein uS14, found in Halalkalibacterium halodurans (strain ATCC BAA-125 / DSM 18197 / FERM 7344 / JCM 9153 / C-125) (Bacillus halodurans).